The primary structure comprises 455 residues: Bifunctional protein GlmU (455 aa).

Positions 1–226 (MGLSVVILAA…EFEILGVNDR (226 aa)) are pyrophosphorylase. UDP-N-acetyl-alpha-D-glucosamine contacts are provided by residues 8 to 11 (LAAG), K22, Q73, 78 to 79 (GT), 99 to 101 (YGD), G136, E151, N166, and N224. D101 is a Mg(2+) binding site. Residue N224 coordinates Mg(2+). The segment at 227 to 247 (TQLASLERVWQRNVAEKIMAK) is linker. Residues 248 to 455 (GVSIADPNRF…WQRSVKKTDK (208 aa)) are N-acetyltransferase. R330 and K348 together coordinate UDP-N-acetyl-alpha-D-glucosamine. The Proton acceptor role is filled by H360. Residues Y363 and N374 each contribute to the UDP-N-acetyl-alpha-D-glucosamine site. Acetyl-CoA is bound by residues A377, 383-384 (NY), S402, A420, and R437.

In the N-terminal section; belongs to the N-acetylglucosamine-1-phosphate uridyltransferase family. The protein in the C-terminal section; belongs to the transferase hexapeptide repeat family. Homotrimer. It depends on Mg(2+) as a cofactor.

It localises to the cytoplasm. The enzyme catalyses alpha-D-glucosamine 1-phosphate + acetyl-CoA = N-acetyl-alpha-D-glucosamine 1-phosphate + CoA + H(+). It catalyses the reaction N-acetyl-alpha-D-glucosamine 1-phosphate + UTP + H(+) = UDP-N-acetyl-alpha-D-glucosamine + diphosphate. It functions in the pathway nucleotide-sugar biosynthesis; UDP-N-acetyl-alpha-D-glucosamine biosynthesis; N-acetyl-alpha-D-glucosamine 1-phosphate from alpha-D-glucosamine 6-phosphate (route II): step 2/2. Its pathway is nucleotide-sugar biosynthesis; UDP-N-acetyl-alpha-D-glucosamine biosynthesis; UDP-N-acetyl-alpha-D-glucosamine from N-acetyl-alpha-D-glucosamine 1-phosphate: step 1/1. The protein operates within bacterial outer membrane biogenesis; LPS lipid A biosynthesis. Its function is as follows. Catalyzes the last two sequential reactions in the de novo biosynthetic pathway for UDP-N-acetylglucosamine (UDP-GlcNAc). The C-terminal domain catalyzes the transfer of acetyl group from acetyl coenzyme A to glucosamine-1-phosphate (GlcN-1-P) to produce N-acetylglucosamine-1-phosphate (GlcNAc-1-P), which is converted into UDP-GlcNAc by the transfer of uridine 5-monophosphate (from uridine 5-triphosphate), a reaction catalyzed by the N-terminal domain. The chain is Bifunctional protein GlmU from Francisella tularensis subsp. holarctica (strain OSU18).